The following is a 265-amino-acid chain: GTP cyclohydrolase 1 type 2 homolog (265 aa).

A divalent metal cation contacts are provided by His65, Asp103, His225, and Glu228.

The protein belongs to the GTP cyclohydrolase I type 2/NIF3 family. Homohexamer.

The protein is GTP cyclohydrolase 1 type 2 homolog of Streptococcus pneumoniae serotype 4 (strain ATCC BAA-334 / TIGR4).